A 227-amino-acid polypeptide reads, in one-letter code: Phosphoglycolate phosphatase (227 aa).

The active-site Nucleophile is D8. Residues D8 and D10 each contribute to the Mg(2+) site. K150 is a substrate binding site. Mg(2+)-binding residues include D173 and D177.

This sequence belongs to the archaeal SPP-like hydrolase family. Requires Mg(2+) as cofactor.

The enzyme catalyses 2-phosphoglycolate + H2O = glycolate + phosphate. Its function is as follows. Catalyzes the dephosphorylation of 2-phosphoglycolate. The protein is Phosphoglycolate phosphatase of Sulfolobus acidocaldarius (strain ATCC 33909 / DSM 639 / JCM 8929 / NBRC 15157 / NCIMB 11770).